Reading from the N-terminus, the 125-residue chain is Probable 4-amino-4-deoxy-L-arabinose-phosphoundecaprenol flippase subunit ArnF (125 aa).

Over 1–2 (MG) the chain is Cytoplasmic. A helical transmembrane segment spans residues 3–23 (VMWGLISVAIASLAQLSLGFA). At 24 to 33 (MMRLPSIAHP) the chain is on the periplasmic side. A helical transmembrane segment spans residues 34–54 (LAFISGLGALNAATLALFAGL). Residues 55–76 (AGYLVSVFCWHKTLHTLALSKA) are Cytoplasmic-facing. Residues 77–97 (YALLSLSYVLVWVASMLLPGL) traverse the membrane as a helical segment. At 98–100 (QGA) the chain is on the periplasmic side. The helical transmembrane segment at 101–121 (FSLKAMLGVLCIMAGVMLIFL) threads the bilayer. The Cytoplasmic portion of the chain corresponds to 122 to 125 (PARS).

This sequence belongs to the ArnF family. In terms of assembly, heterodimer of ArnE and ArnF.

The protein localises to the cell inner membrane. The protein operates within bacterial outer membrane biogenesis; lipopolysaccharide biosynthesis. In terms of biological role, translocates 4-amino-4-deoxy-L-arabinose-phosphoundecaprenol (alpha-L-Ara4N-phosphoundecaprenol) from the cytoplasmic to the periplasmic side of the inner membrane. The chain is Probable 4-amino-4-deoxy-L-arabinose-phosphoundecaprenol flippase subunit ArnF from Salmonella agona (strain SL483).